Reading from the N-terminus, the 368-residue chain is Phosphate acyltransferase (368 aa).

Belongs to the PlsX family. As to quaternary structure, homodimer. Probably interacts with PlsY.

The protein resides in the cytoplasm. The enzyme catalyses a fatty acyl-[ACP] + phosphate = an acyl phosphate + holo-[ACP]. Its pathway is lipid metabolism; phospholipid metabolism. Functionally, catalyzes the reversible formation of acyl-phosphate (acyl-PO(4)) from acyl-[acyl-carrier-protein] (acyl-ACP). This enzyme utilizes acyl-ACP as fatty acyl donor, but not acyl-CoA. The polypeptide is Phosphate acyltransferase (Methylibium petroleiphilum (strain ATCC BAA-1232 / LMG 22953 / PM1)).